The chain runs to 466 residues: Coagulation factor VII (466 aa).

The N-terminal stretch at 1 to 20 (MVSQALRLLCLLLGLQGCLA) is a signal peptide. The propeptide occupies 21–60 (AGGVAEASGGETRDXXWKPGPHRVFITQEEAHGVLHRRRR). One can recognise a Gla domain in the interval 61-105 (ANAFLEELRPGSLERECKEEQCSFEEAREIFKDLERTKLFWISYS). 10 positions are modified to 4-carboxyglutamate: Glu66, Glu67, Glu74, Glu76, Glu79, Glu80, Glu85, Glu86, Glu89, and Glu95. A disulfide bridge connects residues Cys77 and Cys82. The 37-residue stretch at 106–142 (DGDQCASSPCQNGGSCKDQLQSYICFCLPAFEGRNCE) folds into the EGF-like 1; calcium-binding domain. Disulfide bonds link Cys110–Cys121, Cys115–Cys130, Cys132–Cys141, Cys151–Cys162, Cys158–Cys172, Cys174–Cys187, Cys195–Cys322, Cys219–Cys224, Cys238–Cys254, and Cys370–Cys389. Ser112 is a glycosylation site (O-linked (Glc...) serine; alternate). O-linked (Xyl...) serine; alternate glycosylation is present at Ser112. O-linked (Fuc) serine glycosylation is present at Ser120. Asp123 bears the (3R)-3-hydroxyaspartate mark. The EGF-like 2 domain occupies 147-188 (DQLICVNENGGCEQYCSDHTGTKRSCRCHEGYSLLADGVSCT). Asn205 carries N-linked (GlcNAc...) asparagine glycosylation. The Peptidase S1 domain maps to 213 to 452 (IVGGKVCPKG…YIEWLQKLMR (240 aa)). Residues His253 and Asp302 each act as charge relay system in the active site. Asn382 is a glycosylation site (N-linked (GlcNAc...) asparagine). A substrate-binding site is contributed by Asp398. Residues Cys400 and Cys428 are joined by a disulfide bond. The active-site Charge relay system is Ser404.

The protein belongs to the peptidase S1 family. As to quaternary structure, heterodimer of a light chain and a heavy chain linked by a disulfide bond. The vitamin K-dependent, enzymatic carboxylation of some glutamate residues allows the modified protein to bind calcium. In terms of processing, the iron and 2-oxoglutarate dependent 3-hydroxylation of aspartate and asparagine is (R) stereospecific within EGF domains. Post-translationally, O-glycosylated. O-fucosylated by POFUT1 on a conserved serine or threonine residue found in the consensus sequence C2-X(4,5)-[S/T]-C3 of EGF domains, where C2 and C3 are the second and third conserved cysteines. Can be either O-glucosylated or O-xylosylated at Ser-112 by POGLUT1.

Its subcellular location is the secreted. It catalyses the reaction Selective cleavage of Arg-|-Ile bond in factor X to form factor Xa.. In terms of biological role, initiates the extrinsic pathway of blood coagulation. Serine protease that circulates in the blood in a zymogen form. Factor VII is converted to factor VIIa by factor Xa, factor XIIa, factor IXa, or thrombin by minor proteolysis. In the presence of tissue factor and calcium ions, factor VIIa then converts factor X to factor Xa by limited proteolysis. Factor VIIa also converts factor IX to factor IXa in the presence of tissue factor and calcium. In Pan troglodytes (Chimpanzee), this protein is Coagulation factor VII (F7).